The primary structure comprises 596 residues: Putative terpenoid synthase 5 (596 aa).

The Mg(2+) site is built by D349, D353, N481, and D489. Residues 349 to 353 (DDTCD) carry the DDXXD motif motif.

It belongs to the terpene synthase family. Tpsa subfamily. Mg(2+) serves as cofactor. Requires Mn(2+) as cofactor.

The protein localises to the cytoplasm. It participates in secondary metabolite biosynthesis; terpenoid biosynthesis. This Arabidopsis thaliana (Mouse-ear cress) protein is Putative terpenoid synthase 5 (TPS05).